A 416-amino-acid polypeptide reads, in one-letter code: Imidazolonepropionase (416 aa).

Fe(3+)-binding residues include His-78 and His-80. His-78 and His-80 together coordinate Zn(2+). 4-imidazolone-5-propanoate contacts are provided by Arg-87, Tyr-150, and His-183. An N-formimidoyl-L-glutamate-binding site is contributed by Tyr-150. Residue His-248 coordinates Fe(3+). His-248 contacts Zn(2+). Residue Gln-251 coordinates 4-imidazolone-5-propanoate. Asp-323 contacts Fe(3+). Residue Asp-323 coordinates Zn(2+). Residues Asn-325 and Gly-327 each coordinate N-formimidoyl-L-glutamate. A 4-imidazolone-5-propanoate-binding site is contributed by Thr-328.

Belongs to the metallo-dependent hydrolases superfamily. HutI family. The cofactor is Zn(2+). Fe(3+) is required as a cofactor.

The protein localises to the cytoplasm. The enzyme catalyses 4-imidazolone-5-propanoate + H2O = N-formimidoyl-L-glutamate. The protein operates within amino-acid degradation; L-histidine degradation into L-glutamate; N-formimidoyl-L-glutamate from L-histidine: step 3/3. Its function is as follows. Catalyzes the hydrolytic cleavage of the carbon-nitrogen bond in imidazolone-5-propanoate to yield N-formimidoyl-L-glutamate. It is the third step in the universal histidine degradation pathway. The sequence is that of Imidazolonepropionase from Vibrio parahaemolyticus serotype O3:K6 (strain RIMD 2210633).